Here is a 374-residue protein sequence, read N- to C-terminus: Relaxin-3 receptor 2 (374 aa).

At 1 to 43 the chain is on the extracellular side; the sequence is MPTLNTSASPPTFFWANASGGSVLSADDAPMPVKFLALRLMVA. N-linked (GlcNAc...) asparagine glycosylation is found at Asn5 and Asn17. Residues 44 to 64 form a helical membrane-spanning segment; it reads LAYGLVGAIGLLGNLAVLWVL. The Cytoplasmic portion of the chain corresponds to 65–78; it reads SNCARRAPGPPSDT. The chain crosses the membrane as a helical span at residues 79-99; it reads FVFNLALADLGLALTLPFWAA. At 100-116 the chain is on the extracellular side; sequence ESALDFHWPFGGALCKM. A disulfide bridge links Cys114 with Cys191. Residues 117–137 form a helical membrane-spanning segment; that stretch reads VLTATVLNVYASIFLITALSV. At 138 to 154 the chain is on the cytoplasmic side; it reads ARYWVVAMAAGPGTHLS. A helical transmembrane segment spans residues 155 to 175; it reads LFWARIATLAVWAAAALVTVP. Residues 176–209 are Extracellular-facing; sequence TAVFGVEGEVCGVRLCLLRFPSRYWLGAYQLQRV. Residues 210–230 form a helical membrane-spanning segment; it reads VLAFMVPLGVITTSYLLLLAF. Topologically, residues 231-249 are cytoplasmic; sequence LQRRQRRRQDSRVVARSVR. A helical membrane pass occupies residues 250-270; that stretch reads ILVASFFLCWFPNHVVTLWGV. Topologically, residues 271–281 are extracellular; sequence LVKFDLVPWNS. The helical transmembrane segment at 282–302 threads the bilayer; sequence TFYTIQTYVFPVTTCLAHSNS. Topologically, residues 303 to 374 are cytoplasmic; the sequence is CLNPVLYCLL…LTNLDRGTPG (72 aa).

This sequence belongs to the G-protein coupled receptor 1 family. As to expression, expressed in a broader range of tissues including brain, kidney, testis, thymus, placenta, prostate, salivary gland, thyroid and colon.

Its subcellular location is the cell membrane. High affinity receptor for INSL5. Also acts as a receptor for RLN3/relaxin-3, as well as bradykinin and kallidin. Binding of the ligand inhibit cAMP accumulation. The polypeptide is Relaxin-3 receptor 2 (RXFP4) (Homo sapiens (Human)).